The following is a 238-amino-acid chain: Envelope glycoprotein G (238 aa).

Positions 1 to 24 (MSQGAMRAVVPIIPFLLVLVGVSG) are cleaved as a signal peptide. The Virion surface segment spans residues 25–189 (VPTNVSSTTQ…SFLTASPALD (165 aa)). N-linked (GlcNAc...) asparagine; by host glycans are attached at residues Asn-28 and Asn-49. Composition is skewed to polar residues over residues 28–42 (NVSS…TTGR) and 49–68 (NMTQ…TTPD). A disordered region spans residues 28 to 171 (NVSSTTQPQL…LTSKGRPLVP (144 aa)). Residues 78 to 88 (LEEEEEEEGAG) are compositionally biased toward acidic residues. Residues 89-100 (DGEHLEGGDGTR) show a composition bias toward basic and acidic residues. A helical transmembrane segment spans residues 190–210 (TLFVVSTVIHTLSFLCIGAMA). Over 211-238 (THLCGGWSRRGRRTHPSVRYVCLPSERG) the chain is Intravirion.

This sequence belongs to the alphaherpesvirinae glycoprotein G family.

The protein localises to the virion membrane. In terms of biological role, chemokine-binding protein that inhibits neutrophils' chemotaxis. This is Envelope glycoprotein G (gG) from Human herpesvirus 1 (strain 17) (HHV-1).